Here is a 196-residue protein sequence, read N- to C-terminus: MAASVFCCLRCCRDGGTGHIPLKEMPAVQLDTQHMGTDVVIVKNGRRICGTGGCLASAPLHQNKSYFEFKIQSTGIWGIGVATQKVNLNQIPLGRDVHSLVMRNDGALYHNNEEKNRLPANSLPQEGDVVGITYDHVELNVYLNGKNMHCPASGIRGTVYPVVYVDDSAILDCQFSEFYHTPPPGFEKILFEQQIF.

Ala2 carries the N-acetylalanine modification. The region spanning 2–184 (AASVFCCLRC…FSEFYHTPPP (183 aa)) is the B30.2/SPRY domain.

This is SPRY domain-containing protein 7 (SPRYD7) from Bos taurus (Bovine).